We begin with the raw amino-acid sequence, 490 residues long: tRNA-guanine(15) transglycosylase (490 aa).

Residue D90 is the Nucleophile of the active site. The substrate site is built by D125 and A193. Zn(2+) is bound by residues C276, C278, and C281.

Belongs to the archaeosine tRNA-ribosyltransferase family. Zn(2+) is required as a cofactor.

The catalysed reaction is guanosine(15) in tRNA + 7-cyano-7-deazaguanine = 7-cyano-7-carbaguanosine(15) in tRNA + guanine. It participates in tRNA modification; archaeosine-tRNA biosynthesis. In terms of biological role, exchanges the guanine residue with 7-cyano-7-deazaguanine (preQ0) at position 15 in the dihydrouridine loop (D-loop) of archaeal tRNAs. This chain is tRNA-guanine(15) transglycosylase, found in Methanosarcina acetivorans (strain ATCC 35395 / DSM 2834 / JCM 12185 / C2A).